A 120-amino-acid polypeptide reads, in one-letter code: NADH-quinone oxidoreductase subunit A (120 aa).

3 helical membrane-spanning segments follow: residues 6–26 (YGII…ALAT), 63–83 (FLYA…YPWA), and 89–109 (LGLF…LGLW).

The protein belongs to the complex I subunit 3 family. In terms of assembly, NDH-1 is composed of 14 different subunits. Subunits NuoA, H, J, K, L, M, N constitute the membrane sector of the complex.

It is found in the cell membrane. It carries out the reaction a quinone + NADH + 5 H(+)(in) = a quinol + NAD(+) + 4 H(+)(out). Functionally, NDH-1 shuttles electrons from NADH, via FMN and iron-sulfur (Fe-S) centers, to quinones in the respiratory chain. The immediate electron acceptor for the enzyme in this species is believed to be a menaquinone. Couples the redox reaction to proton translocation (for every two electrons transferred, four hydrogen ions are translocated across the cytoplasmic membrane), and thus conserves the redox energy in a proton gradient. This Moorella thermoacetica (strain ATCC 39073 / JCM 9320) protein is NADH-quinone oxidoreductase subunit A.